We begin with the raw amino-acid sequence, 530 residues long: Tyrosinase (530 aa).

The signal sequence occupies residues 1-18 (MLLAALCCLLWSFRTSTG). Residues 19 to 473 (HFPRACASSK…IKPYLEQASR (455 aa)) are Lumenal, melanosome-facing. N-linked (GlcNAc...) asparagine glycans are attached at residues N86, N111, and N161. Cu cation-binding residues include H180, H202, and H211. Residues N230 and N337 are each glycosylated (N-linked (GlcNAc...) asparagine). Cu cation-binding residues include H363 and H367. The N-linked (GlcNAc...) asparagine glycan is linked to N371. H390 is a Cu cation binding site. The helical transmembrane segment at 474–494 (IWPWLIGAAVVGCVVTAVLGG) threads the bilayer. Topologically, residues 495–530 (LTSLLCRRNRKQLHEEKQPLLMEKEDYHSLLYQTHL) are cytoplasmic.

Belongs to the tyrosinase family. As to quaternary structure, forms an OPN3-dependent complex with DCT in response to blue light in melanocytes. Requires Cu(2+) as cofactor. Glycosylated.

The protein resides in the melanosome membrane. It is found in the melanosome. The enzyme catalyses 2 L-dopa + O2 = 2 L-dopaquinone + 2 H2O. The catalysed reaction is L-tyrosine + O2 = L-dopaquinone + H2O. It catalyses the reaction 2 5,6-dihydroxyindole-2-carboxylate + O2 = 2 indole-5,6-quinone-2-carboxylate + 2 H2O. This is a copper-containing oxidase that functions in the formation of pigments such as melanins and other polyphenolic compounds. Catalyzes the initial and rate limiting step in the cascade of reactions leading to melanin production from tyrosine. In addition to hydroxylating tyrosine to DOPA (3,4-dihydroxyphenylalanine), also catalyzes the oxidation of DOPA to DOPA-quinone, and possibly the oxidation of DHI (5,6-dihydroxyindole) to indole-5,6 quinone. This chain is Tyrosinase (TYR), found in Canis lupus familiaris (Dog).